The sequence spans 356 residues: 3-dehydroquinate synthase (356 aa).

NAD(+) contacts are provided by residues 106 to 110 (GVVGD), 130 to 131 (TT), K143, and K152. Positions 185, 248, and 265 each coordinate Zn(2+).

Belongs to the sugar phosphate cyclases superfamily. Dehydroquinate synthase family. It depends on Co(2+) as a cofactor. Zn(2+) serves as cofactor. Requires NAD(+) as cofactor.

It localises to the cytoplasm. It catalyses the reaction 7-phospho-2-dehydro-3-deoxy-D-arabino-heptonate = 3-dehydroquinate + phosphate. Its pathway is metabolic intermediate biosynthesis; chorismate biosynthesis; chorismate from D-erythrose 4-phosphate and phosphoenolpyruvate: step 2/7. Catalyzes the conversion of 3-deoxy-D-arabino-heptulosonate 7-phosphate (DAHP) to dehydroquinate (DHQ). This Thermoanaerobacter pseudethanolicus (strain ATCC 33223 / 39E) (Clostridium thermohydrosulfuricum) protein is 3-dehydroquinate synthase.